A 314-amino-acid chain; its full sequence is Homoserine O-acetyltransferase (314 aa).

The Acyl-thioester intermediate role is filled by C142. K163 and S192 together coordinate substrate. The active-site Proton acceptor is the H235. The active site involves E237. R249 is a binding site for substrate.

This sequence belongs to the MetA family.

It is found in the cytoplasm. The catalysed reaction is L-homoserine + acetyl-CoA = O-acetyl-L-homoserine + CoA. It participates in amino-acid biosynthesis; L-methionine biosynthesis via de novo pathway; O-acetyl-L-homoserine from L-homoserine: step 1/1. In terms of biological role, transfers an acetyl group from acetyl-CoA to L-homoserine, forming acetyl-L-homoserine. This chain is Homoserine O-acetyltransferase, found in Streptococcus mutans serotype c (strain ATCC 700610 / UA159).